The following is a 618-amino-acid chain: Dihydroxy-acid dehydratase (618 aa).

Aspartate 81 provides a ligand contact to Mg(2+). Cysteine 122 is a [2Fe-2S] cluster binding site. Mg(2+)-binding residues include aspartate 123 and lysine 124. N6-carboxylysine is present on lysine 124. Cysteine 199 is a [2Fe-2S] cluster binding site. Mg(2+) is bound at residue glutamate 495. The active-site Proton acceptor is the serine 521.

The protein belongs to the IlvD/Edd family. As to quaternary structure, homodimer. The cofactor is [2Fe-2S] cluster. Requires Mg(2+) as cofactor.

The catalysed reaction is (2R)-2,3-dihydroxy-3-methylbutanoate = 3-methyl-2-oxobutanoate + H2O. It catalyses the reaction (2R,3R)-2,3-dihydroxy-3-methylpentanoate = (S)-3-methyl-2-oxopentanoate + H2O. Its pathway is amino-acid biosynthesis; L-isoleucine biosynthesis; L-isoleucine from 2-oxobutanoate: step 3/4. The protein operates within amino-acid biosynthesis; L-valine biosynthesis; L-valine from pyruvate: step 3/4. Functionally, functions in the biosynthesis of branched-chain amino acids. Catalyzes the dehydration of (2R,3R)-2,3-dihydroxy-3-methylpentanoate (2,3-dihydroxy-3-methylvalerate) into 2-oxo-3-methylpentanoate (2-oxo-3-methylvalerate) and of (2R)-2,3-dihydroxy-3-methylbutanoate (2,3-dihydroxyisovalerate) into 2-oxo-3-methylbutanoate (2-oxoisovalerate), the penultimate precursor to L-isoleucine and L-valine, respectively. The sequence is that of Dihydroxy-acid dehydratase from Blochmanniella floridana.